The primary structure comprises 255 residues: Gene 54 protein (255 aa).

The chain is Gene 54 protein (54) from Mycobacterium (Mycobacteriophage L5).